The chain runs to 474 residues: MPKKLLIKTWGCQMNEYDSSKMADLLNAANGFELTEVPEEADVLLLNTCSIREKAQEKVFHQLGRWKRLKEKKPDLVIGVGGCVATQEGDAIRKRAPYVDVIFGPQTLHRLPQMIKDSQSNHGPVMDISFPEVEKFDNLPEPRADGVTAFVSIMEGCSKYCTYCVVPYTRGEEVSRPIDDVLYEVAQLAEQGVREVNLLGQNVNAFRGPTHDGEMASFAELLRLVAAIDGIDRIRYTTSHPIEFTDDIIEVYTDTPELVNYLHLPVQSGSDRILTMMKRPHTVLEYKSKIRKLRKVRPDITMSSDFIVAFPGESDQDFQDTMKLIRDIDFDISYSFVFSPRPGTPAADYPCDISEKVKKERLYELQQQINTQAMRHARQMLNTEQRILVEGPSRKNIMELRGRTENNRIVNFEGSAELIGQFVDVNITDVFTNSLRGELVRTEAEMDLRVAMTPLEVMEKARKEDELGVGVYTP.

The MTTase N-terminal domain maps to 3–120 (KKLLIKTWGC…LPQMIKDSQS (118 aa)). The [4Fe-4S] cluster site is built by Cys-12, Cys-49, Cys-83, Cys-157, Cys-161, and Cys-164. One can recognise a Radical SAM core domain in the interval 143–375 (RADGVTAFVS…QQQINTQAMR (233 aa)). The TRAM domain maps to 378–441 (RQMLNTEQRI…TNSLRGELVR (64 aa)).

It belongs to the methylthiotransferase family. MiaB subfamily. In terms of assembly, monomer. Requires [4Fe-4S] cluster as cofactor.

Its subcellular location is the cytoplasm. The enzyme catalyses N(6)-dimethylallyladenosine(37) in tRNA + (sulfur carrier)-SH + AH2 + 2 S-adenosyl-L-methionine = 2-methylsulfanyl-N(6)-dimethylallyladenosine(37) in tRNA + (sulfur carrier)-H + 5'-deoxyadenosine + L-methionine + A + S-adenosyl-L-homocysteine + 2 H(+). Catalyzes the methylthiolation of N6-(dimethylallyl)adenosine (i(6)A), leading to the formation of 2-methylthio-N6-(dimethylallyl)adenosine (ms(2)i(6)A) at position 37 in tRNAs that read codons beginning with uridine. This chain is tRNA-2-methylthio-N(6)-dimethylallyladenosine synthase, found in Photobacterium profundum (strain SS9).